Here is a 123-residue protein sequence, read N- to C-terminus: Class II hydrophobin 2 (123 aa).

An N-terminal signal peptide occupies residues 1–16 (MRSFLVIATLAVGAFG). 4 cysteine pairs are disulfide-bonded: C22–C70, C32–C61, C33–C45, and C71–C82.

This sequence belongs to the cerato-ulmin hydrophobin family. Homodimer. Homodimers further self-assemble to form highly ordered films at water-air interfaces through intermolecular interactions.

Its subcellular location is the secreted. The protein localises to the cell wall. In terms of biological role, aerial growth, conidiation, and dispersal of filamentous fungi in the environment rely upon a capability of their secreting small amphipathic proteins called hydrophobins (HPBs) with low sequence identity. Class I can self-assemble into an outermost layer of rodlet bundles on aerial cell surfaces, conferring cellular hydrophobicity that supports fungal growth, development and dispersal; whereas Class II form highly ordered films at water-air interfaces through intermolecular interactions but contribute nothing to the rodlet structure. Hyd2 is a class II hydrophobin that plays probably a role in intraspecific signaling or hyphal fusion. Not necessary for root adhesion and colonization. Might play an essential role since no deletion mutants could be obtained. This Bionectria ochroleuca (Gliocladium roseum) protein is Class II hydrophobin 2.